The primary structure comprises 251 residues: Hydroxyacylglutathione hydrolase (251 aa).

Zn(2+) is bound by residues His53, His55, Asp57, His58, His110, Asp127, and His165.

This sequence belongs to the metallo-beta-lactamase superfamily. Glyoxalase II family. As to quaternary structure, monomer. Requires Zn(2+) as cofactor.

It catalyses the reaction an S-(2-hydroxyacyl)glutathione + H2O = a 2-hydroxy carboxylate + glutathione + H(+). It participates in secondary metabolite metabolism; methylglyoxal degradation; (R)-lactate from methylglyoxal: step 2/2. Its function is as follows. Thiolesterase that catalyzes the hydrolysis of S-D-lactoyl-glutathione to form glutathione and D-lactic acid. The protein is Hydroxyacylglutathione hydrolase of Escherichia coli (strain ATCC 8739 / DSM 1576 / NBRC 3972 / NCIMB 8545 / WDCM 00012 / Crooks).